A 192-amino-acid chain; its full sequence is Ras-like GTP-binding protein Rho1 (192 aa).

Position 12–19 (12–19 (GDGACGKT)) interacts with GTP. The Effector region motif lies at 34–42 (YVPTVFENY). Residues 59–63 (DTAGQ) and 117–120 (NKKD) contribute to the GTP site. Cysteine 189 is subject to Cysteine methyl ester. Cysteine 189 is lipidated: S-geranylgeranyl cysteine. A propeptide spans 190 to 192 (LLL) (removed in mature form).

The protein belongs to the small GTPase superfamily. Rho family. In terms of assembly, interacts with capu. Interacts (via REM repeats) with Pkn (via N-terminus). Interacts (via N-terminus) with wash (via N-terminus). May interact with dia/diaphanous (via CBD/FH3 domain). Expressed in hemocytes (at protein level).

It localises to the cell membrane. The protein localises to the cytoplasm. The protein resides in the cytoskeleton. Its subcellular location is the apical cell membrane. It is found in the lateral cell membrane. Its function is as follows. Has a role in regulating actin cytoskeletal organization: required during early development for proper execution of morphogenetic movements of individual cells and groups of cells important for the formation of the embryonic body plan. Plays a role in regulating dorsal closure during embryogenesis. During axis elongation, required for Rho-kinase Rok planar polarity and adherens junction localization as well as for generating a planar polarized distribution of the actin-binding protein Shrm. During embryogenesis, acts upstream of wash to regulate the developmental migration of tail hemocytes anteriorly along the ventral midline. May have a role in eye development. Involved in targeted recruitment of dia/diaphanous to apical membranes of polarized epithelial cells. The protein is Ras-like GTP-binding protein Rho1 of Drosophila melanogaster (Fruit fly).